The primary structure comprises 130 residues: UPF0251 protein MmarC7_1642 (130 aa).

This sequence belongs to the UPF0251 family.

In Methanococcus maripaludis (strain C7 / ATCC BAA-1331), this protein is UPF0251 protein MmarC7_1642.